Here is a 143-residue protein sequence, read N- to C-terminus: Large ribosomal subunit protein uL11 (143 aa).

The protein belongs to the universal ribosomal protein uL11 family. Part of the ribosomal stalk of the 50S ribosomal subunit. Interacts with L10 and the large rRNA to form the base of the stalk. L10 forms an elongated spine to which L12 dimers bind in a sequential fashion forming a multimeric L10(L12)X complex. Post-translationally, one or more lysine residues are methylated.

Its function is as follows. Forms part of the ribosomal stalk which helps the ribosome interact with GTP-bound translation factors. This chain is Large ribosomal subunit protein uL11, found in Ralstonia pickettii (strain 12J).